We begin with the raw amino-acid sequence, 464 residues long: tRNA-2-methylthio-N(6)-dimethylallyladenosine synthase (464 aa).

Residues 19-135 enclose the MTTase N-terminal domain; the sequence is GSYWITTFGC…LENLLGKVDL (117 aa). Positions 28, 64, 98, 170, 174, and 177 each coordinate [4Fe-4S] cluster. Residues 156-394 form the Radical SAM core domain; the sequence is RESSICGWVN…DLVEKTARSR (239 aa). Positions 396-464 constitute a TRAM domain; it reads QRYIDNIESV…PFSLTGELSL (69 aa).

The protein belongs to the methylthiotransferase family. MiaB subfamily. In terms of assembly, monomer. Requires [4Fe-4S] cluster as cofactor.

The protein localises to the cytoplasm. The enzyme catalyses N(6)-dimethylallyladenosine(37) in tRNA + (sulfur carrier)-SH + AH2 + 2 S-adenosyl-L-methionine = 2-methylsulfanyl-N(6)-dimethylallyladenosine(37) in tRNA + (sulfur carrier)-H + 5'-deoxyadenosine + L-methionine + A + S-adenosyl-L-homocysteine + 2 H(+). Its function is as follows. Catalyzes the methylthiolation of N6-(dimethylallyl)adenosine (i(6)A), leading to the formation of 2-methylthio-N6-(dimethylallyl)adenosine (ms(2)i(6)A) at position 37 in tRNAs that read codons beginning with uridine. The sequence is that of tRNA-2-methylthio-N(6)-dimethylallyladenosine synthase from Prochlorococcus marinus (strain MIT 9301).